Here is a 155-residue protein sequence, read N- to C-terminus: Ribonuclease H (155 aa).

Residues methionine 1–aspartate 143 enclose the RNase H type-1 domain. Mg(2+)-binding residues include aspartate 9, glutamate 47, aspartate 69, and aspartate 135.

It belongs to the RNase H family. As to quaternary structure, monomer. Mg(2+) serves as cofactor.

It localises to the cytoplasm. The catalysed reaction is Endonucleolytic cleavage to 5'-phosphomonoester.. In terms of biological role, endonuclease that specifically degrades the RNA of RNA-DNA hybrids. The polypeptide is Ribonuclease H (Verminephrobacter eiseniae (strain EF01-2)).